We begin with the raw amino-acid sequence, 85 residues long: Alpha-defensin 14 (85 aa).

The signal sequence occupies residues 1-11 (ALVLLAFQVQA). Positions 12–50 (DPIQNTDEETKTEEQPGEDDQAVSVSFGDPEGSSLQEES) are excised as a propeptide. The disordered stretch occupies residues 13 to 48 (PIQNTDEETKTEEQPGEDDQAVSVSFGDPEGSSLQE). 3 cysteine pairs are disulfide-bonded: C56–C84, C58–C73, and C63–C83.

It belongs to the alpha-defensin family. As to expression, paneth cells of the small bowel.

It is found in the secreted. Probably contributes to the antimicrobial barrier function of the small bowel mucosa. This chain is Alpha-defensin 14 (Defa14), found in Mus musculus (Mouse).